A 157-amino-acid chain; its full sequence is Arginine repressor (157 aa).

This sequence belongs to the ArgR family.

The protein localises to the cytoplasm. It participates in amino-acid biosynthesis; L-arginine biosynthesis [regulation]. Functionally, regulates arginine biosynthesis genes. The sequence is that of Arginine repressor from Bacteroides thetaiotaomicron (strain ATCC 29148 / DSM 2079 / JCM 5827 / CCUG 10774 / NCTC 10582 / VPI-5482 / E50).